We begin with the raw amino-acid sequence, 271 residues long: Protein MGF 360-15R (271 aa).

The protein belongs to the asfivirus MGF 360 family.

Plays a role in virus cell tropism, and may be required for efficient virus replication in macrophages. This chain is Protein MGF 360-15R, found in African swine fever virus (isolate Tick/Malawi/Lil 20-1/1983) (ASFV).